The following is a 134-amino-acid chain: D-xylulose reductase (134 aa).

Positions 31–115 (PATTTXYKXQ…XXQXDKIGRY (85 aa)) are disordered. The span at 50–59 (QTHEGTHQDV) shows a compositional bias: basic and acidic residues.

Belongs to the zinc-containing alcohol dehydrogenase family.

It carries out the reaction xylitol + NAD(+) = D-xylulose + NADH + H(+). Its activity is regulated as follows. Activated by calcium and inhibited by zinc. The chain is D-xylulose reductase from Sus scrofa (Pig).